We begin with the raw amino-acid sequence, 493 residues long: Fizzy-related protein homolog (493 aa).

3 disordered regions span residues 31 to 51 (LTPANSPVSSPSKHGDRFIPS), 64 to 88 (INENEKSPSQNRKAKDATSDNGKDG), and 105 to 166 (EKVQ…SPRK). T32 bears the Phosphothreonine mark. Residues 32-42 (TPANSPVSSPS) are compositionally biased toward polar residues. A Phosphoserine modification is found at S36. Position 69 is an N6-acetyllysine (K69). Composition is skewed to basic and acidic residues over residues 76 to 86 (KAKDATSDNGK) and 106 to 126 (KVQDPQTEDRRLQPSTPEHKG). S133, S138, S146, and S151 each carry phosphoserine. Polar residues predominate over residues 146 to 160 (SPYSLSPVSNKSQKL). An N6-acetyllysine modification is found at K159. 7 WD repeats span residues 182-222 (PELQ…VTRL), 227-266 (VEGDSVTSVGWSERGNLVAVGTHKGFVQIWDAAAGKKLSM), 269-306 (GHTARVGALAWNADQLSSGSRDRMILQRDIRTPPLQSE), 311-350 (GHRQEVCGLKWSTDHQLLASGGNDNKLLVWNHSSLSPVQQ), 353-395 (EHLA…PLQC), 397-438 (DTGS…QVAK), and 441-480 (GHSYRVLYLAMSPDGEAIVTGAGDETLRFWNVFSKTRSTK).

The protein belongs to the WD repeat CDC20/Fizzy family. In terms of assembly, the unphosphorylated form interacts with APC/C during mitosis. Interacts with NINL. Interacts (in complex with the anaphase promoting complex APC) with MAD2L2; inhibits FZR1-mediated APC/C activation. Interacts with SIRT2. Interacts with USP37. Interacts (via WD repeats) with MAK. Interacts with RBBP8/CtIP; this interaction leads to RBBP8 proteasomal degradation. Interacts with HECW2. Interacts with SASS6; the interaction is regulated by CENATAC and leads to SASS6 proteasomal degradation. Interacts (via N-terminus) with CCNF. Interacts with CDC6. Interacts with TK1 (via the KEN box). In terms of processing, acetylated. Deacetylated by SIRT2 at Lys-69 and Lys-159; deacetylation enhances the interaction of FZR1 with CDC27, leading to activation of anaphase promoting complex/cyclosome (APC/C). Following DNA damage, it is dephosphorylated by CDC14B in G2 phase, leading to its reassociation with the APC/C, and allowing an efficient G2 DNA damage checkpoint. Phosphorylated by MAK.

The protein operates within protein modification; protein ubiquitination. Substrate-specific adapter for the anaphase promoting complex/cyclosome (APC/C) E3 ubiquitin-protein ligase complex. Associates with the APC/C in late mitosis, in replacement of CDC20, and activates the APC/C during anaphase and telophase. The APC/C remains active in degrading substrates to ensure that positive regulators of the cell cycle do not accumulate prematurely. At the G1/S transition FZR1 is phosphorylated, leading to its dissociation from the APC/C. Following DNA damage, it is required for the G2 DNA damage checkpoint: its dephosphorylation and reassociation with the APC/C leads to the ubiquitination of PLK1, preventing entry into mitosis. Acts as an adapter for APC/C to target the DNA-end resection factor RBBP8/CtIP for ubiquitination and subsequent proteasomal degradation. Through the regulation of RBBP8/CtIP protein turnover, may play a role in DNA damage response, favoring DNA double-strand repair through error-prone non-homologous end joining (NHEJ) over error-free, RBBP8-mediated homologous recombination (HR). The chain is Fizzy-related protein homolog (Fzr1) from Mus musculus (Mouse).